The sequence spans 429 residues: Zygotic gap protein knirps (429 aa).

The nuclear receptor DNA-binding region spans 2–78 (NQTCKVCGEP…VGMSKGGSRY (77 aa)). 2 consecutive NR C4-type zinc fingers follow at residues 5 to 25 (CKVC…CEGC) and 42 to 66 (CKNE…LRKC). Positions 112–126 (SVGGAPSASSPVGSP) are enriched in low complexity. Disordered regions lie at residues 112 to 148 (SVGG…QQQQ), 223 to 250 (QSVD…SSAR), 338 to 357 (TSRS…QEVE), and 375 to 397 (SSSS…AEVK). 2 stretches are compositionally biased toward polar residues: residues 225–237 (VDSV…FSPA) and 338–349 (TSRSSVHSFNDS). Residues 375-393 (SSSSSSHSAAHSPNTTTAH) show a composition bias toward low complexity.

Belongs to the nuclear hormone receptor family. NR0 subfamily.

Its subcellular location is the nucleus. Functionally, transcriptional repressor. Binds to multiple sites in the eve stripe 3 enhancer element. Plays an essential role in the segmentation process both by refining the expression patterns of gap genes and by establishing pair-rules stripes of gene expression. In Drosophila melanogaster (Fruit fly), this protein is Zygotic gap protein knirps (kni).